The sequence spans 63 residues: Small ribosomal subunit protein eS17 (63 aa).

The protein belongs to the eukaryotic ribosomal protein eS17 family.

In Methanococcus aeolicus (strain ATCC BAA-1280 / DSM 17508 / OCM 812 / Nankai-3), this protein is Small ribosomal subunit protein eS17.